A 207-amino-acid chain; its full sequence is Large ribosomal subunit protein uL4 (207 aa).

The tract at residues 49–75 (HAVKNRSAVSGGGRKPWKQKGTGRARA) is disordered.

This sequence belongs to the universal ribosomal protein uL4 family. Part of the 50S ribosomal subunit.

In terms of biological role, one of the primary rRNA binding proteins, this protein initially binds near the 5'-end of the 23S rRNA. It is important during the early stages of 50S assembly. It makes multiple contacts with different domains of the 23S rRNA in the assembled 50S subunit and ribosome. Functionally, forms part of the polypeptide exit tunnel. This is Large ribosomal subunit protein uL4 from Leuconostoc mesenteroides subsp. mesenteroides (strain ATCC 8293 / DSM 20343 / BCRC 11652 / CCM 1803 / JCM 6124 / NCDO 523 / NBRC 100496 / NCIMB 8023 / NCTC 12954 / NRRL B-1118 / 37Y).